The following is a 473-amino-acid chain: MKTLYSLRRFYPVETLFNGTLALAGRDQETTGFAWWAGNARLINLSGKLLGAHVAHAGLIVFWAGAMNLFEVAHFVPEKPMYEQGLILLPHLATLGWGVGPGGEVIDTFPYFVSGVLHLISSAVLGFGGIYHALLGPETLEESFPFFGYVWKDRNKMTTILGIHLILLGIGAFLLVFKALYFGGVYDTWAPGGGDVRKITNLTLSPSVIFGYLLKSPFGGEGWIVSVDDLEDIIGGHVWLGSICILGGIWHILTKPFAWARRALVWSGEAYLSYSLGALAVFGFIACCFVWFNNTAYPSEFYGPTGPEASQAQAFTFLVRDQRLGANVGSAQGPTGLGKYLMRSPTGEVIFGGETMRFWDLRAPWLEPLRGPNGLDLSRLKKDIQPWQERRSAEYMTHAPLGSLNSVGGVATEINAVNYVSPRSWLATSHFVLGFFLFVGHLWHAGRARAAAAGFEKGIDRDFEPVLSMTPLN.

Residues 1-14 (MKTLYSLRRFYPVE) constitute a propeptide that is removed on maturation. The residue at position 15 (Thr-15) is an N-acetylthreonine. Thr-15 is subject to Phosphothreonine. The next 5 membrane-spanning stretches (helical) occupy residues 69–93 (LFEVAHFVPEKPMYEQGLILLPHLA), 134–155 (LLGPETLEESFPFFGYVWKDRN), 178–200 (KALYFGGVYDTWAPGGGDVRKIT), 255–275 (KPFAWARRALVWSGEAYLSYS), and 291–312 (WFNNTAYPSEFYGPTGPEASQA). Glu-367 is a binding site for [CaMn4O5] cluster. The chain crosses the membrane as a helical span at residues 447 to 471 (RARAAAAGFEKGIDRDFEPVLSMTP).

The protein belongs to the PsbB/PsbC family. PsbC subfamily. As to quaternary structure, PSII is composed of 1 copy each of membrane proteins PsbA, PsbB, PsbC, PsbD, PsbE, PsbF, PsbH, PsbI, PsbJ, PsbK, PsbL, PsbM, PsbT, PsbX, PsbY, PsbZ, Psb30/Ycf12, at least 3 peripheral proteins of the oxygen-evolving complex and a large number of cofactors. It forms dimeric complexes. It depends on Binds multiple chlorophylls and provides some of the ligands for the Ca-4Mn-5O cluster of the oxygen-evolving complex. It may also provide a ligand for a Cl- that is required for oxygen evolution. PSII binds additional chlorophylls, carotenoids and specific lipids. as a cofactor.

It is found in the plastid. The protein resides in the chloroplast thylakoid membrane. One of the components of the core complex of photosystem II (PSII). It binds chlorophyll and helps catalyze the primary light-induced photochemical processes of PSII. PSII is a light-driven water:plastoquinone oxidoreductase, using light energy to abstract electrons from H(2)O, generating O(2) and a proton gradient subsequently used for ATP formation. In Populus trichocarpa (Western balsam poplar), this protein is Photosystem II CP43 reaction center protein.